The sequence spans 527 residues: MNKKGFLDSSSTKILQDLAVAPIDLTAPGVISKERIERFSLSVEGFTLSYATERVDEGILSALEDLASERGLIESMQAMQNGEVVNYIENFPSESRPALHTATRAWVKESPLQGNAEDISLRSKIEAQRLKDFLNRYRDVFTTIVQIGIGGSELGPKALHWALKGCCPSDKKVYFVSNVDPDNAAEVLQEIDCAKTLVVTVSKSGTTLETAVNEELLADHFLKQGLHFQDHFIAVTCEGSPMDDTSKYLEVFHIWDSIGGRYSSTSMVGGVVLGFAYGFDVFLQLLEGAASMDLAALEPRMSENLPLLSAMLGIWNRNFLRYPTSAVVPYATGLEYFPAHLQQCGMESNGKSVAQTGEVIGFATSPILWGEVGTNSQHSFFQCLHQGSDIVPIEFIGFQENQRGKDIVIAGSSSSQKLFANMVAQSIALAKGRENTNPNKNFRGNRPSSLLVSERLTPYTMGALLAFYEHKIVFQGFCWGINSFDQEGVTLGKDLANQVLQVMQGQEKEGALLEAEALLRLFNNIKK.

Residue E347 is the Proton donor of the active site. Residues H378 and K493 contribute to the active site.

The protein belongs to the GPI family.

The protein resides in the cytoplasm. The enzyme catalyses alpha-D-glucose 6-phosphate = beta-D-fructose 6-phosphate. It participates in carbohydrate biosynthesis; gluconeogenesis. It functions in the pathway carbohydrate degradation; glycolysis; D-glyceraldehyde 3-phosphate and glycerone phosphate from D-glucose: step 2/4. Functionally, catalyzes the reversible isomerization of glucose-6-phosphate to fructose-6-phosphate. The sequence is that of Glucose-6-phosphate isomerase from Chlamydia caviae (strain ATCC VR-813 / DSM 19441 / 03DC25 / GPIC) (Chlamydophila caviae).